Consider the following 457-residue polypeptide: Argininosuccinate lyase (457 aa).

This sequence belongs to the lyase 1 family. Argininosuccinate lyase subfamily.

It is found in the cytoplasm. The enzyme catalyses 2-(N(omega)-L-arginino)succinate = fumarate + L-arginine. The protein operates within amino-acid biosynthesis; L-arginine biosynthesis; L-arginine from L-ornithine and carbamoyl phosphate: step 3/3. The chain is Argininosuccinate lyase from Escherichia coli O7:K1 (strain IAI39 / ExPEC).